Here is a 557-residue protein sequence, read N- to C-terminus: 2-succinyl-5-enolpyruvyl-6-hydroxy-3-cyclohexene-1-carboxylate synthase (557 aa).

The protein belongs to the TPP enzyme family. MenD subfamily. As to quaternary structure, homodimer. It depends on Mg(2+) as a cofactor. The cofactor is Mn(2+). Thiamine diphosphate serves as cofactor.

The catalysed reaction is isochorismate + 2-oxoglutarate + H(+) = 5-enolpyruvoyl-6-hydroxy-2-succinyl-cyclohex-3-ene-1-carboxylate + CO2. It participates in quinol/quinone metabolism; 1,4-dihydroxy-2-naphthoate biosynthesis; 1,4-dihydroxy-2-naphthoate from chorismate: step 2/7. The protein operates within quinol/quinone metabolism; menaquinone biosynthesis. In terms of biological role, catalyzes the thiamine diphosphate-dependent decarboxylation of 2-oxoglutarate and the subsequent addition of the resulting succinic semialdehyde-thiamine pyrophosphate anion to isochorismate to yield 2-succinyl-5-enolpyruvyl-6-hydroxy-3-cyclohexene-1-carboxylate (SEPHCHC). This Staphylococcus aureus (strain Mu3 / ATCC 700698) protein is 2-succinyl-5-enolpyruvyl-6-hydroxy-3-cyclohexene-1-carboxylate synthase.